The chain runs to 500 residues: Probable malate:quinone oxidoreductase (500 aa).

This sequence belongs to the MQO family. FAD is required as a cofactor.

The enzyme catalyses (S)-malate + a quinone = a quinol + oxaloacetate. It participates in carbohydrate metabolism; tricarboxylic acid cycle; oxaloacetate from (S)-malate (quinone route): step 1/1. This Bacillus cereus (strain G9842) protein is Probable malate:quinone oxidoreductase.